We begin with the raw amino-acid sequence, 324 residues long: Beta-ketoacyl-[acyl-carrier-protein] synthase III (324 aa).

Catalysis depends on residues Cys112 and His249. Residues Gln250 to Arg254 form an ACP-binding region. Asn279 is a catalytic residue.

The protein belongs to the thiolase-like superfamily. FabH family. Homodimer.

It is found in the cytoplasm. The enzyme catalyses malonyl-[ACP] + acetyl-CoA + H(+) = 3-oxobutanoyl-[ACP] + CO2 + CoA. It participates in lipid metabolism; fatty acid biosynthesis. In terms of biological role, catalyzes the condensation reaction of fatty acid synthesis by the addition to an acyl acceptor of two carbons from malonyl-ACP. Catalyzes the first condensation reaction which initiates fatty acid synthesis and may therefore play a role in governing the total rate of fatty acid production. Possesses both acetoacetyl-ACP synthase and acetyl transacylase activities. Its substrate specificity determines the biosynthesis of branched-chain and/or straight-chain of fatty acids. This chain is Beta-ketoacyl-[acyl-carrier-protein] synthase III, found in Streptococcus pyogenes serotype M1.